The sequence spans 506 residues: Cobyric acid synthase (506 aa).

One can recognise a GATase cobBQ-type domain in the interval Asp-251–Phe-448. Residue Cys-332 is the Nucleophile of the active site. Residue His-440 is part of the active site.

The protein belongs to the CobB/CobQ family. CobQ subfamily.

The protein operates within cofactor biosynthesis; adenosylcobalamin biosynthesis. Functionally, catalyzes amidations at positions B, D, E, and G on adenosylcobyrinic A,C-diamide. NH(2) groups are provided by glutamine, and one molecule of ATP is hydrogenolyzed for each amidation. In Salmonella agona (strain SL483), this protein is Cobyric acid synthase.